Reading from the N-terminus, the 142-residue chain is Large ribosomal subunit protein uL11 (142 aa).

Belongs to the universal ribosomal protein uL11 family. Part of the ribosomal stalk of the 50S ribosomal subunit. Interacts with L10 and the large rRNA to form the base of the stalk. L10 forms an elongated spine to which L12 dimers bind in a sequential fashion forming a multimeric L10(L12)X complex. One or more lysine residues are methylated.

Forms part of the ribosomal stalk which helps the ribosome interact with GTP-bound translation factors. This chain is Large ribosomal subunit protein uL11, found in Idiomarina loihiensis (strain ATCC BAA-735 / DSM 15497 / L2-TR).